Here is a 392-residue protein sequence, read N- to C-terminus: MGEKKEETATKPQGEKKPTDGGITTVVMKLDMHCEGCGKKIKRIFKHFKGVEDVKIDYKSNKLTVIGNVDPVEVRDKVADKIKRPVELVSTVAPPKKETPPSSGGAEKKPSPAAEEKPAEKKPAAVEKPGEKKEEKKKEEGEKKASPPPPPKESTVVLKTKLHCEGCEHKIKRIVNKIKGVNSVAIDSAKDLVIVKGIIDVKQLTPYLNEKLKRTVEVVPAKKDDGAPVAAAAAAPAGGEKKDKVAGEKKEIKDVGEKKVDGGGEKKKEVAVGGGGGGGGGGGDGGAMDVKKSEYNGYGYPPQPMYYYPEGQVYGQQHYMMQGQSSQSYVQEPYSNQGYVQESYMNQGYGQGYGQEAPPPPYMNQQGYADPYGHMRAPELFSDENPNGCSVM.

The span at 1–19 shows a compositional bias: basic and acidic residues; the sequence is MGEKKEETATKPQGEKKPT. The disordered stretch occupies residues 1 to 22; it reads MGEKKEETATKPQGEKKPTDGG. The HMA 1 domain maps to 23 to 86; the sequence is ITTVVMKLDM…KVADKIKRPV (64 aa). Cys34 and Cys37 together coordinate Cd(2+). The tract at residues 89-157 is disordered; the sequence is VSTVAPPKKE…PPPPKESTVV (69 aa). The segment covering 106–145 has biased composition (basic and acidic residues); that stretch reads AEKKPSPAAEEKPAEKKPAAVEKPGEKKEEKKKEEGEKKA. The HMA 2 domain maps to 153-216; it reads ESTVVLKTKL…YLNEKLKRTV (64 aa). Cd(2+) contacts are provided by Cys164 and Cys167. A compositionally biased stretch (basic and acidic residues) spans 258–270; sequence KKVDGGGEKKKEV. Disordered regions lie at residues 258-285 and 350-392; these read KKVD…GGDG and GQGY…CSVM. A compositionally biased stretch (gly residues) spans 272–285; the sequence is VGGGGGGGGGGGDG. Cys389 carries the cysteine methyl ester modification. A lipid anchor (S-farnesyl cysteine) is attached at Cys389. The propeptide at 390–392 is removed in mature form; it reads SVM.

It belongs to the HIPP family. In terms of tissue distribution, expressed in petioles, hypocotyls, peduncles, vascular bundles and root meristems.

The protein localises to the cell membrane. Heavy-metal-binding protein. Involved in the maintenance of heavy metal homeostasis and/or in detoxification. The chain is Heavy metal-associated isoprenylated plant protein 6 from Arabidopsis thaliana (Mouse-ear cress).